Here is a 475-residue protein sequence, read N- to C-terminus: Aspartyl/glutamyl-tRNA(Asn/Gln) amidotransferase subunit B (475 aa).

Belongs to the GatB/GatE family. GatB subfamily. Heterotrimer of A, B and C subunits.

The catalysed reaction is L-glutamyl-tRNA(Gln) + L-glutamine + ATP + H2O = L-glutaminyl-tRNA(Gln) + L-glutamate + ADP + phosphate + H(+). It catalyses the reaction L-aspartyl-tRNA(Asn) + L-glutamine + ATP + H2O = L-asparaginyl-tRNA(Asn) + L-glutamate + ADP + phosphate + 2 H(+). Functionally, allows the formation of correctly charged Asn-tRNA(Asn) or Gln-tRNA(Gln) through the transamidation of misacylated Asp-tRNA(Asn) or Glu-tRNA(Gln) in organisms which lack either or both of asparaginyl-tRNA or glutaminyl-tRNA synthetases. The reaction takes place in the presence of glutamine and ATP through an activated phospho-Asp-tRNA(Asn) or phospho-Glu-tRNA(Gln). The chain is Aspartyl/glutamyl-tRNA(Asn/Gln) amidotransferase subunit B from Chlorobium chlorochromatii (strain CaD3).